The following is a 154-amino-acid chain: Ribosome maturation factor RimP (154 aa).

It belongs to the RimP family.

It is found in the cytoplasm. Functionally, required for maturation of 30S ribosomal subunits. This is Ribosome maturation factor RimP from Flavobacterium psychrophilum (strain ATCC 49511 / DSM 21280 / CIP 103535 / JIP02/86).